A 311-amino-acid chain; its full sequence is Protein nfe2 (311 aa).

Functionally, responsible for the nodulation efficiency and competitive ability of strain GR4 on alfalfa roots. The chain is Protein nfe2 (nfe2) from Rhizobium meliloti (Ensifer meliloti).